The following is a 174-amino-acid chain: Adipose-secreted signaling protein (174 aa).

Ala-2 carries the post-translational modification N-acetylalanine. Thr-147 carries the phosphothreonine modification.

This sequence belongs to the ADISSP family. In terms of tissue distribution, expression is adipose-specific and highly brown adipose tissue-enriched.

It localises to the secreted. Its function is as follows. Adipocyte-secreted protein (adipokine) that acts as a key regulator for white adipose tissue (WAT) thermogenesis and glucose homeostasis at least in part through activation of protein kinase A (PKA). The chain is Adipose-secreted signaling protein from Mus musculus (Mouse).